Reading from the N-terminus, the 125-residue chain is Apolipoprotein C-IV (125 aa).

The signal sequence occupies residues 1–27; the sequence is MSLLRHSLQALPALCLCVLVLACIGAC.

Belongs to the apolipoprotein C4 family.

The protein localises to the secreted. In terms of biological role, may participate in lipoprotein metabolism. The sequence is that of Apolipoprotein C-IV (APOC4) from Ateles geoffroyi (Black-handed spider monkey).